The chain runs to 1320 residues: Centrosomin (1320 aa).

Positions 20 to 41 (ASFDVPRPPGGGNSPLPSQGRS) are disordered. The stretch at 97–516 (RKTVDVKMEL…SSQEKEIKKL (420 aa)) forms a coiled coil. The span at 517 to 530 (NQENEQSANKENDC) shows a compositional bias: basic and acidic residues. A disordered region spans residues 517–554 (NQENEQSANKENDCAKTVISPSSSGRSMSDNEASSQEM). The segment covering 535–554 (ISPSSSGRSMSDNEASSQEM) has biased composition (polar residues). Ser-545 carries the phosphoserine modification. Coiled coils occupy residues 626 to 654 (EADL…KVDV) and 712 to 983 (NSLL…LKLA). The short motif at 644–656 (RNKLLQRKVDVLF) is the Nuclear localization signal element. Thr-782 bears the Phosphothreonine mark. Ser-785 carries the phosphoserine modification. The segment covering 810 to 823 (KKELEKRRSSEGQR) has biased composition (basic and acidic residues). Disordered regions lie at residues 810 to 849 (KKEL…SEPD) and 863 to 893 (SNSL…NRNS). Positions 831–843 (LPSQQFDNQSESE) are enriched in polar residues. Phosphoserine occurs at positions 874, 876, 878, 1191, 1234, 1237, and 1239. The tract at residues 1220–1249 (VEMKTEGSASPKAKSEESTSPDSKSNVATG) is disordered. Over residues 1237–1247 (STSPDSKSNVA) the composition is skewed to polar residues.

Monomer. In terms of tissue distribution, developing visceral mesoderm of the midgut, the central and peripheral nervous system, and developing gonads. Isoform J: Expressed in ovaries, testis and embryos. Isoform A: Expressed in testis only.

The protein resides in the cytoplasm. Its subcellular location is the cytoskeleton. It localises to the microtubule organizing center. The protein localises to the centrosome. It is found in the flagellum basal body. The protein resides in the perinuclear region. In terms of biological role, core component of the centrosome throughout spermatogenesis. May participate in mitotic spindle assembly and the mechanics of morphogenesis through an interaction with microtubules, either directly or indirectly. Is a target of several homeotic genes. In Drosophila melanogaster (Fruit fly), this protein is Centrosomin (cnn).